Reading from the N-terminus, the 374-residue chain is DNA-directed RNA polymerase subunit alpha (374 aa).

The alpha N-terminal domain (alpha-NTD) stretch occupies residues 1–257; it reads MSDNAHNLLY…KHFSIFENMD (257 aa). An alpha C-terminal domain (alpha-CTD) region spans residues 274–374; the sequence is KDDILHKLIL…EKIRAKNIKG (101 aa).

The protein belongs to the RNA polymerase alpha chain family. Homodimer. The RNAP catalytic core consists of 2 alpha, 1 beta, 1 beta' and 1 omega subunit. When a sigma factor is associated with the core the holoenzyme is formed, which can initiate transcription.

The enzyme catalyses RNA(n) + a ribonucleoside 5'-triphosphate = RNA(n+1) + diphosphate. Its function is as follows. DNA-dependent RNA polymerase catalyzes the transcription of DNA into RNA using the four ribonucleoside triphosphates as substrates. The polypeptide is DNA-directed RNA polymerase subunit alpha (Chlamydia pneumoniae (Chlamydophila pneumoniae)).